Reading from the N-terminus, the 116-residue chain is Classical arabinogalactan protein 25 (116 aa).

Residues 1-28 (MAFSFLNKLLIIFIFIFISLSSSSPTIS) form the signal peptide. The tract at residues 40-95 (LLPSPGDALPSDDGSGTIPSSPSPPDPDTNDGSYPDPLAFSPFASPPVSSPSPPPS) is disordered. 2 stretches are compositionally biased toward low complexity: residues 50–59 (SDDGSGTIPS) and 69–82 (NDGSYPDPLAFSPF). Pro residues predominate over residues 83–95 (ASPPVSSPSPPPS). Residue Ser-89 is the site of GPI-anchor amidated serine attachment. Residues 90–116 (PSPPPSLPSAGVLLISLIISSASFLAL) constitute a propeptide, removed in mature form.

Belongs to the classical AGP family. O-glycosylated on the hydroxyproline residues.

Its subcellular location is the cell membrane. Its function is as follows. Proteoglycan that seems to be implicated in diverse developmental roles such as differentiation, cell-cell recognition, embryogenesis and programmed cell death. The chain is Classical arabinogalactan protein 25 (AGP25) from Arabidopsis thaliana (Mouse-ear cress).